Here is a 189-residue protein sequence, read N- to C-terminus: Elongation factor P (189 aa).

Belongs to the elongation factor P family.

Its subcellular location is the cytoplasm. It functions in the pathway protein biosynthesis; polypeptide chain elongation. Its function is as follows. Involved in peptide bond synthesis. Stimulates efficient translation and peptide-bond synthesis on native or reconstituted 70S ribosomes in vitro. Probably functions indirectly by altering the affinity of the ribosome for aminoacyl-tRNA, thus increasing their reactivity as acceptors for peptidyl transferase. The protein is Elongation factor P of Rhizobium meliloti (strain 1021) (Ensifer meliloti).